A 185-amino-acid chain; its full sequence is CASP-like protein 2C2 (185 aa).

Topologically, residues M1–A22 are cytoplasmic. Residues L23–V43 form a helical membrane-spanning segment. At R44–Q53 the chain is on the extracellular side. The chain crosses the membrane as a helical span at residues A54–L74. The Cytoplasmic segment spans residues K75–K104. The helical transmembrane segment at A105–L125 threads the bilayer. Over D126 to Q146 the chain is Extracellular. A helical membrane pass occupies residues V147 to A167. The Cytoplasmic portion of the chain corresponds to S168 to H185.

The protein belongs to the Casparian strip membrane proteins (CASP) family. In terms of assembly, homodimer and heterodimers.

The protein localises to the cell membrane. The protein is CASP-like protein 2C2 of Zea mays (Maize).